The chain runs to 1032 residues: Protein transport protein Sec24D (1032 aa).

Residues methionine 1–aspartate 260 form a disordered region. Positions proline 102 to glycine 133 are enriched in polar residues. Over residues glycine 198–proline 212 the composition is skewed to pro residues. The residue at position 266 (serine 266) is a Phosphoserine. Zn(2+)-binding residues include cysteine 363, cysteine 366, cysteine 385, and cysteine 388. The tract at residues cysteine 363 to cysteine 388 is zinc finger-like. The stretch at methionine 901 to methionine 974 is one Gelsolin-like repeat.

The protein belongs to the SEC23/SEC24 family. SEC24 subfamily. As to quaternary structure, COPII is composed of at least five proteins: the Sec23/24 complex, the Sec13/31 complex and Sar1. Interacts with TMED2 and TMED10. Interacts with CNIH4. Interacts with GOSR2 (via IxM motif) and STX5 (via IxM motif); recruits GOSR2 and STX5 into COPII-coated vesicles. Interacts with KCNA3; this interaction is reduced in the presence of KCNE4. As to expression, ubiquitously expressed, with higher amounts in placenta, pancreas, heart and liver.

Its subcellular location is the cytoplasmic vesicle. It localises to the COPII-coated vesicle membrane. The protein resides in the endoplasmic reticulum membrane. It is found in the cytoplasm. The protein localises to the cytosol. Functionally, component of the coat protein complex II (COPII) which promotes the formation of transport vesicles from the endoplasmic reticulum (ER). The coat has two main functions, the physical deformation of the endoplasmic reticulum membrane into vesicles and the selection of cargo molecules for their transport to the Golgi complex. Plays a central role in cargo selection within the COPII complex and together with SEC24C may have a different specificity compared to SEC24A and SEC24B. May more specifically package GPI-anchored proteins through the cargo receptor TMED10. May also be specific for IxM motif-containing cargos like the SNAREs GOSR2 and STX5. The chain is Protein transport protein Sec24D from Homo sapiens (Human).